The following is a 230-amino-acid chain: Androgen-dependent TFPI-regulating protein (230 aa).

Topologically, residues 1–7 are cytoplasmic; the sequence is MTKTTTC. A helical transmembrane segment spans residues 8-28; it reads LYHFVVLNWYIFLNYYIPQIG. Residues 29–45 lie on the Extracellular side of the membrane; it reads KDEEKLKEFHDGGRSKY. The helical transmembrane segment at 46–66 threads the bilayer; the sequence is LTLLNLLLQAVFFGVACLDDV. Residues 67-85 lie on the Cytoplasmic side of the membrane; it reads LKRVIGRKDIKFITYFRDL. A helical transmembrane segment spans residues 86–106; the sequence is LFTTLAFPLSTFVFLVFWSLF. The Extracellular segment spans residues 107 to 120; that stretch reads HYDRSLVYPKGLDD. The helical transmembrane segment at 121-141 threads the bilayer; that stretch reads FFPAWVNHAMHTSIFPFSLAE. At 142–155 the chain is on the cytoplasmic side; the sequence is TVLRPHNYPSKKLG. A helical transmembrane segment spans residues 156–173; that stretch reads LSLLGACNFAYIIRILWR. Topologically, residues 174-190 are extracellular; that stretch reads YVQTGNWVYPVFASLSP. The chain crosses the membrane as a helical span at residues 191–211; that stretch reads LGIILFFSASYILSASLYLFG. Over 212–230 the chain is Cytoplasmic; it reads EKINHWKWGATVKPRMKKN.

It belongs to the AIG1 family.

Its subcellular location is the cell membrane. It catalyses the reaction 9-hexadecanoyloxy-octadecanoate + H2O = 9-hydroxy-octadecanoate + hexadecanoate + H(+). It carries out the reaction 12-hexadecanoyloxy-octadecanoate + H2O = 12-hydroxyoctadecanoate + hexadecanoate + H(+). The catalysed reaction is 9-(9Z-hexadecenoyloxy)-octadecanoate + H2O = (9Z)-hexadecenoate + 9-hydroxy-octadecanoate + H(+). The enzyme catalyses 12-(9Z-hexadecenoyloxy)-octadecanoate + H2O = 12-hydroxyoctadecanoate + (9Z)-hexadecenoate + H(+). It catalyses the reaction 13-(9Z-hexadecenoyloxy)-octadecanoate + H2O = 13-hydroxy-octadecanoate + (9Z)-hexadecenoate + H(+). It carries out the reaction 9-octadecanoyloxy-octadecanoate + H2O = 9-hydroxy-octadecanoate + octadecanoate + H(+). The catalysed reaction is 12-octadecanoyloxy-octadecanoate + H2O = 12-hydroxyoctadecanoate + octadecanoate + H(+). The enzyme catalyses 13-octadecanoyloxy-octadecanoate + H2O = 13-hydroxy-octadecanoate + octadecanoate + H(+). It catalyses the reaction 9-(9Z-octadecenoyloxy)-octadecanoate + H2O = 9-hydroxy-octadecanoate + (9Z)-octadecenoate + H(+). It carries out the reaction 12-(9Z-octadecenoyloxy)-octadecanoate + H2O = 12-hydroxyoctadecanoate + (9Z)-octadecenoate + H(+). The catalysed reaction is 13-(9Z-octadecenoyloxy)-octadecanoate + H2O = 13-hydroxy-octadecanoate + (9Z)-octadecenoate + H(+). The enzyme catalyses 5-(9Z-octadecenoyloxy)-octadecanoate + H2O = 5-hydroxy-octadecanoate + (9Z)-octadecenoate + H(+). Functionally, hydrolyzes bioactive fatty-acid esters of hydroxy-fatty acids (FAHFAs), but not other major classes of lipids. Shows a preference for FAHFAs with branching distal from the carboxylate head group of the lipids. Regulates the expression and the cell-associated anticoagulant activity of the inhibitor TFPI in endothelial cells (in vitro). In Rattus norvegicus (Rat), this protein is Androgen-dependent TFPI-regulating protein (Adtrp).